A 364-amino-acid chain; its full sequence is 3-isopropylmalate dehydrogenase (364 aa).

76 to 89 lines the NAD(+) pocket; sequence GPKWEKLPPNEQPE. The substrate site is built by Arg-97, Arg-107, Arg-136, and Asp-225. The Mg(2+) site is built by Asp-225, Asp-249, and Asp-253. 283-295 serves as a coordination point for NAD(+); that stretch reads GSAPDIAGKGIAN.

The protein belongs to the isocitrate and isopropylmalate dehydrogenases family. LeuB type 1 subfamily. In terms of assembly, homodimer. Mg(2+) serves as cofactor. Mn(2+) is required as a cofactor.

The protein localises to the cytoplasm. The enzyme catalyses (2R,3S)-3-isopropylmalate + NAD(+) = 4-methyl-2-oxopentanoate + CO2 + NADH. Its pathway is amino-acid biosynthesis; L-leucine biosynthesis; L-leucine from 3-methyl-2-oxobutanoate: step 3/4. Catalyzes the oxidation of 3-carboxy-2-hydroxy-4-methylpentanoate (3-isopropylmalate) to 3-carboxy-4-methyl-2-oxopentanoate. The product decarboxylates to 4-methyl-2 oxopentanoate. This is 3-isopropylmalate dehydrogenase from Shewanella oneidensis (strain ATCC 700550 / JCM 31522 / CIP 106686 / LMG 19005 / NCIMB 14063 / MR-1).